We begin with the raw amino-acid sequence, 333 residues long: MSPGQDATLLERSIKIAFVVALYWVVSISMVFLNKYLLSEVSLDAPMFVTWFQCVVAVVTCFILGELRSYHPALEMFPRFAFDTHVAMKVLPLSLVFVGMIAFNNLALKFVGVAFYNVGRSLTTIFNVLLSFFMLQQRTSMPALLMCGVIVAGFFVGVNKEQEQADLTMAGIMYGVLASLCVALNAIYIKKVMPFVDNDMWKLTAYNNMNAIFLFLPVITFMGEIPDIAASEDVYSGNYWFLMTVAGLLGIAIGLVSMLQINVTSPLTHNISGTSKACAQTILALQLNDESRTATWWLGNVFVLGGSLGYVLVKRAEMKRDLEKVPSSADSKA.

8 helical membrane passes run 13–33 (SIKIAFVVALYWVVSISMVFL), 45–65 (APMFVTWFQCVVAVVTCFILG), 95–115 (LVFVGMIAFNNLALKFVGVAF), 139–159 (TSMPALLMCGVIVAGFFVGVN), 169–189 (MAGIMYGVLASLCVALNAIYI), 211–231 (AIFLFLPVITFMGEIPDIAAS), 239–259 (YWFLMTVAGLLGIAIGLVSML), and 293–313 (TATWWLGNVFVLGGSLGYVLV).

The protein belongs to the TPT transporter family. SLC35C subfamily.

Its subcellular location is the golgi apparatus membrane. The catalysed reaction is GMP(out) + GDP-beta-L-fucose(in) = GMP(in) + GDP-beta-L-fucose(out). Its function is as follows. Antiporter specific for GDP-l-fucose and depending on the concomitant reverse transport of GMP. Involved in GDP-fucose import from the cytoplasm into the Golgi lumen. This Monosiga brevicollis (Choanoflagellate) protein is GDP-fucose transporter 1 (slc35c1).